The primary structure comprises 141 residues: MRQRTIVCPIIQNNGAYLLCKMASDRGVFPGQWALSGGGMEPGETMEEALRREIREELGERLEITAVKPWAFRDDIRVKTYADGTTEQIYMIYLIFDCLSANRDVTFNEEFQDIAWVTRESLNTLDLNEATRLTFTQKGLL.

A Nudix hydrolase domain is found at 1–141; that stretch reads MRQRTIVCPI…RLTFTQKGLL (141 aa). The Nudix box motif lies at 38 to 59; that stretch reads GGMEPGETMEEALRREIREELG.

This sequence belongs to the Nudix hydrolase family. NudI subfamily. As to quaternary structure, monomer. Mg(2+) serves as cofactor.

It carries out the reaction a ribonucleoside 5'-triphosphate + H2O = a ribonucleoside 5'-phosphate + diphosphate + H(+). The catalysed reaction is a 2'-deoxyribonucleoside 5'-triphosphate + H2O = a 2'-deoxyribonucleoside 5'-phosphate + diphosphate + H(+). It catalyses the reaction dUTP + H2O = dUMP + diphosphate + H(+). The enzyme catalyses dTTP + H2O = dTMP + diphosphate + H(+). It carries out the reaction dCTP + H2O = dCMP + diphosphate + H(+). Catalyzes the hydrolysis of nucleoside triphosphates, with a preference for pyrimidine deoxynucleoside triphosphates (dUTP, dTTP and dCTP). In Enterobacter sp. (strain 638), this protein is Nucleoside triphosphatase NudI.